The primary structure comprises 542 residues: Major facilitator superfamily transporter mfsA (542 aa).

Helical transmembrane passes span 19 to 39 (FAAV…AGLL), 70 to 90 (GAVT…SMFC), 99 to 119 (LIFM…VCYT), 127 to 149 (FVIG…PVWQ), 160 to 180 (FLVC…YWVV), 194 to 214 (FPVA…LMLP), 321 to 341 (IMGG…FFMI), 349 to 369 (LYLI…ACLI), 380 to 400 (AVGI…LPWI), 413 to 432 (VGAS…VVMF), and 444 to 464 (VYLF…FFYV).

It belongs to the major facilitator superfamily. Sugar transporter (TC 2.A.1.1) family.

It is found in the membrane. Major facilitator superfamily transporter that may be involved in A.fumigatus adaptation to azoles such as vorizonazole. This is Major facilitator superfamily transporter mfsA from Aspergillus fumigatus (strain ATCC MYA-4609 / CBS 101355 / FGSC A1100 / Af293) (Neosartorya fumigata).